The sequence spans 395 residues: MAGGLMADLEAFRKAQRADGPATILAIGTATPPNAVDQSTYPDYYFKITNSEHMTELKEKFQRMCDKSAIKKRYMYLTDEILKENPNVCEYMAPSLDARQDMVVVEVPRLGKEAATKAIKEWGQPKSKITHVIFCTTSGVDMPGADYQLTKLLGLRPSVKRVMMYQQGCFAGGTVLRVAKDLAENNRGARVLVVCSEITAVTFRGPSDTHLDSMVGQALFGDGAAALIVGADPIPQVEKPCFELMWTAQTILPDSDGAIDGHLREVGLTFHLLKDVPGLISKNIEKSLVEAFQQFGISDWNQLFWIAHPGGPAILDQVEAKLNLDPKKLRATRQVLSEYGNMSSACVHFILDEMRKSSNEKGCSTTGEGLDVGVLFGFGPGLTVETVVLKSVPLQ.

Residue Cys-169 is part of the active site.

It belongs to the thiolase-like superfamily. Chalcone/stilbene synthases family.

It catalyses the reaction (E)-4-coumaroyl-CoA + 3 malonyl-CoA + 3 H(+) = 2',4,4',6'-tetrahydroxychalcone + 3 CO2 + 4 CoA. Its pathway is secondary metabolite biosynthesis; flavonoid biosynthesis. Its function is as follows. The primary product of this enzyme is 4,2',4',6'-tetrahydroxychalcone (also termed naringenin-chalcone or chalcone) which can under specific conditions spontaneously isomerize into naringenin. In Picea mariana (Black spruce), this protein is Chalcone synthase 7 (CSF7).